Consider the following 309-residue polypeptide: L-2-keto-3-deoxyarabonate dehydratase (309 aa).

Lysine 171 serves as the catalytic Schiff-base intermediate with substrate.

This sequence belongs to the DapA family. Homodimer.

The catalysed reaction is 2-dehydro-3-deoxy-L-arabinonate = 2,5-dioxopentanoate + H2O. Catalyzes the dehydration of L-2-keto-3-deoxyarabonate (L-KDA) to alpha-ketoglutaric semialdehyde (alphaKGSA). Is involved in a degradation pathway of L-arabinose that allows A.brasilense to grow on L-arabinose as a sole carbon source. In Azospirillum brasilense, this protein is L-2-keto-3-deoxyarabonate dehydratase (araD).